The primary structure comprises 392 residues: MNARSTGQHPARYPGAAAGEPTLDSWQEAPHNRWAFARLGELLPTAAVSRRDPATPAEPVVRLDALATRLPDLEQRLEETCTDAFLVLRGSEVLAEYYRAGFAPDDRHLLMSVSKSLCGTVVGALIDEGRIDPAQPVTEYVPELAGSVYDGPSVLQVLDMQISIDYNEDYVDPASEVQTHDRSAGWRTRRDGDPADTYEFLTTLRGDGGTGEFQYCSANTDVLAWIVERVTGLRYVEALSTYLWAKLDADRDATITVDQTGFGFANGGVSCTARDLARVGRMMLDGGVAPGGRVVSQGWVESVLAGGSREAMTDEGFTSAFPEGSYTRQWWCTGNERGNVSGIGIHGQNLWLDPRTDSVIVKLSSWPDPDTRHWHGLQSGILLDVSRALDAV.

The disordered stretch occupies residues 1 to 22; that stretch reads MNARSTGQHPARYPGAAAGEPT. The active site involves S112.

The enzyme catalyses [N-(6-aminohexanoyl)](n) + H2O = [N-(6-aminohexanoyl)](n-1) + 6-aminohexanoate. It carries out the reaction N-(6-aminohexanoyl)-6-aminohexanoate + H2O = 2 6-aminohexanoate. It participates in xenobiotic degradation; nylon-6 oligomer degradation. Its function is as follows. Involved in nylon oligomer degradation. This is 6-aminohexanoate-dimer hydrolase from Paenarthrobacter ureafaciens.